The sequence spans 134 residues: Small ribosomal subunit protein uS11 (134 aa).

It belongs to the universal ribosomal protein uS11 family. Part of the 30S ribosomal subunit. Interacts with proteins S7 and S18. Binds to IF-3.

Located on the platform of the 30S subunit, it bridges several disparate RNA helices of the 16S rRNA. Forms part of the Shine-Dalgarno cleft in the 70S ribosome. The protein is Small ribosomal subunit protein uS11 of Micrococcus luteus (strain ATCC 4698 / DSM 20030 / JCM 1464 / CCM 169 / CCUG 5858 / IAM 1056 / NBRC 3333 / NCIMB 9278 / NCTC 2665 / VKM Ac-2230) (Micrococcus lysodeikticus).